The sequence spans 341 residues: uncharacterized protein (341 aa).

Positions 153–179 form a coiled coil; that stretch reads AYTLSEKVMNAEREAEETRETIIREAH. Residues 319-335 are compositionally biased toward polar residues; sequence EQLQNPAPESAPSTSKT. The interval 319–341 is disordered; that stretch reads EQLQNPAPESAPSTSKTLRSKNP.

This is an uncharacterized protein from Coxiella burnetii (strain RSA 493 / Nine Mile phase I).